The sequence spans 413 residues: MAVNFPSIDPAQLHPVAGVTLGWAEANIRKPNRKDVLVVSVEEGATVSGVFTENRFCAAPVTVCREHLAKVRAGGAGIRALVVNTGNANAGTGEPGLAHARETCAELARLAGIAPGQVLPFSTGVILEPLPIERLKAGLPAALANRAAANWHDAAQAIMTTDTLPKAASRQVTIDGHTITLTGISKGAGMIKPNMATMLGFLAFDAKVAQPVLDALVKDVADRSFNCITIDGDTSTNDSFILIASGKASLPQIASTDSPAYAALREAVTAVAQALAQLIVRDGEGATKFITVTVEGGKSAAECRQIAYAIGHSPLVKTAFYASDPNLGRILAAIGYAGVADLDVGKIDLYLDDVLVAKAGGRNPAYLEEDGQRVMKQSEIAVRVLLGRGDAQATIWTCDLSHDYVSINADYRS.

Substrate-binding residues include Thr160, Lys186, Thr197, Glu284, Asn408, and Ser413. Residue Thr197 is the Nucleophile of the active site.

Belongs to the ArgJ family. In terms of assembly, heterotetramer of two alpha and two beta chains.

It localises to the cytoplasm. The enzyme catalyses N(2)-acetyl-L-ornithine + L-glutamate = N-acetyl-L-glutamate + L-ornithine. It carries out the reaction L-glutamate + acetyl-CoA = N-acetyl-L-glutamate + CoA + H(+). It functions in the pathway amino-acid biosynthesis; L-arginine biosynthesis; L-ornithine and N-acetyl-L-glutamate from L-glutamate and N(2)-acetyl-L-ornithine (cyclic): step 1/1. It participates in amino-acid biosynthesis; L-arginine biosynthesis; N(2)-acetyl-L-ornithine from L-glutamate: step 1/4. Catalyzes two activities which are involved in the cyclic version of arginine biosynthesis: the synthesis of N-acetylglutamate from glutamate and acetyl-CoA as the acetyl donor, and of ornithine by transacetylation between N(2)-acetylornithine and glutamate. This is Arginine biosynthesis bifunctional protein ArgJ from Burkholderia pseudomallei (strain 1710b).